The chain runs to 149 residues: Large ribosomal subunit protein bL9 (149 aa).

It belongs to the bacterial ribosomal protein bL9 family.

Binds to the 23S rRNA. In Fusobacterium nucleatum subsp. nucleatum (strain ATCC 25586 / DSM 15643 / BCRC 10681 / CIP 101130 / JCM 8532 / KCTC 2640 / LMG 13131 / VPI 4355), this protein is Large ribosomal subunit protein bL9.